A 640-amino-acid chain; its full sequence is MSPRQLIPTLIPEWAPLSQQSCIREDELDSPPITPTSQTSSFGSSFSQQKPTYSTIIGENIHTILDEIRPYVKKITVSDQDKKTINQYTLGVSAGSGQFGYVRKAYSSTLGKVVAVKIIPKKPWNAQQYSVNQVMRQIQLWKSKGKITTNMSGNEAMRLMNIEKCRWEIFAASRLRNNVHIVRLIECLDSPFSESIWIVTNWCSLGELQWKRDDDEDILPQWKKIVISNCSVSTFAKKILEDMTKGLEYLHSQGCIHRDIKPSNILLDEEEKVAKLSDFGSCIFTPQSLPFSDANFEDCFQRELNKIVGTPAFIAPELCHLGNSKRDFVTDGFKLDIWSLGVTLYCLLYNELPFFGENEFETYHKIIEVSLSSKINGNTLNDLVIKRLLEKDVTLRISIQDLVKVLSRDQPIDSRNHSQISSSSVNPVRNEGPVRRFFGRLLTKKGKKKTSGKGKDKVLVSATSKVTPSIHIDEEPDKECFSTTVLRSSPDSSDYCSSLGEEAIQVTDFLDTFCRSNESLPNLTVNNDKQNSDMKTDRSESSSHSSLKIPTPIKAMIRLKSSPKENGNRTHINCSQDKPSSPLMDRTVGKRTVNNSGARKLAHSSNILNFKAYINSEDSDIRETVEDVKTYLNFADNGQI.

The tract at residues 27 to 47 is disordered; that stretch reads ELDSPPITPTSQTSSFGSSFS. Residues 35–47 show a composition bias toward low complexity; it reads PTSQTSSFGSSFS. The Protein kinase domain maps to 88-420; the sequence is YTLGVSAGSG…PIDSRNHSQI (333 aa). ATP is bound by residues 94–102 and lysine 117; that span reads AGSGQFGYV. Serine 152 carries the post-translational modification Phosphoserine. Aspartate 259 functions as the Proton acceptor in the catalytic mechanism. Phosphoserine is present on residues serine 516 and serine 519. Residues 520 to 529 are compositionally biased toward polar residues; it reads LPNLTVNNDK. 2 disordered regions span residues 520–547 and 562–587; these read LPNL…HSSL and SPKE…MDRT. Residues 530 to 541 show a composition bias toward basic and acidic residues; the sequence is QNSDMKTDRSES. The segment covering 569–579 has biased composition (polar residues); sequence RTHINCSQDKP.

It belongs to the protein kinase superfamily. Ser/Thr protein kinase family. The cofactor is Mg(2+).

The catalysed reaction is L-seryl-[protein] + ATP = O-phospho-L-seryl-[protein] + ADP + H(+). The enzyme catalyses L-threonyl-[protein] + ATP = O-phospho-L-threonyl-[protein] + ADP + H(+). Its function is as follows. Important role in G1 events required for bud emergence and septin organization. Coordinates cell growth and cell division at G2/M, essential for efficient cytokinesis and for regulation of SWE1. The polypeptide is Serine/threonine-protein kinase ELM1 (ELM1) (Saccharomyces cerevisiae (strain ATCC 204508 / S288c) (Baker's yeast)).